The chain runs to 1770 residues: U3 small nucleolar RNA-associated protein 10 (1770 aa).

2 helical membrane-spanning segments follow: residues isoleucine 499–serine 519 and leucine 528–alanine 548. The stretch at methionine 1730–tyrosine 1768 is one HEAT repeat.

Belongs to the HEATR1/UTP10 family. In terms of assembly, component of the ribosomal small subunit (SSU) processome.

It localises to the nucleus. Its subcellular location is the nucleolus. The protein resides in the membrane. Involved in nucleolar processing of pre-18S ribosomal RNA. Involved in ribosome biosynthesis. In Candida glabrata (strain ATCC 2001 / BCRC 20586 / JCM 3761 / NBRC 0622 / NRRL Y-65 / CBS 138) (Yeast), this protein is U3 small nucleolar RNA-associated protein 10.